The primary structure comprises 687 residues: Probable intron-encoded endonuclease aI3 (687 aa).

The segment at 1–374 (MKQMSYVTRW…NASMDVAFHD (374 aa)) is COX1 exons 1 to 3 encoded. 10 consecutive transmembrane segments (helical) span residues 19–39 (IGMT…GMSV), 69–89 (LLMM…NFFL), 103–123 (LNNI…CSVL), 152–172 (AMFA…NFMV), 188–208 (PLFA…LPVL), 240–260 (LFWF…FGVM), 273–293 (FGEM…FLVW), 315–335 (MVIA…IYGG), 341–361 (VPML…LTGV), and 376–396 (IFIY…NNYT). Positions 375 to 687 (RIFIYYVSFF…KKESLMKFLK (313 aa)) are COX1 intron 3 encoded.

In the C-terminal section; belongs to the LAGLIDADG endonuclease family. This sequence in the N-terminal section; belongs to the heme-copper respiratory oxidase family. The mature protein may arise from proteolytic cleavage of an in-frame translation of COX1 exons 1 to 3 plus intron 3, containing the aI3 open reading frame.

It is found in the mitochondrion. It localises to the membrane. Functionally, mitochondrial DNA endonuclease involved in intron homing. The chain is Probable intron-encoded endonuclease aI3 (aI3) from Debaryomyces hansenii (strain ATCC 36239 / CBS 767 / BCRC 21394 / JCM 1990 / NBRC 0083 / IGC 2968) (Yeast).